The primary structure comprises 130 residues: Small ribosomal subunit protein uS11 (130 aa).

It belongs to the universal ribosomal protein uS11 family. As to quaternary structure, part of the 30S ribosomal subunit. Interacts with proteins S7 and S18. Binds to IF-3.

In terms of biological role, located on the platform of the 30S subunit, it bridges several disparate RNA helices of the 16S rRNA. Forms part of the Shine-Dalgarno cleft in the 70S ribosome. The chain is Small ribosomal subunit protein uS11 from Shewanella sediminis (strain HAW-EB3).